Reading from the N-terminus, the 184-residue chain is Protein GrpE (184 aa).

The span at 1–10 (MTDTPPENEE) shows a compositional bias: acidic residues. Residues 1 to 22 (MTDTPPENEEQHESNVQNENEV) are disordered.

It belongs to the GrpE family. As to quaternary structure, homodimer.

The protein localises to the cytoplasm. Participates actively in the response to hyperosmotic and heat shock by preventing the aggregation of stress-denatured proteins, in association with DnaK and GrpE. It is the nucleotide exchange factor for DnaK and may function as a thermosensor. Unfolded proteins bind initially to DnaJ; upon interaction with the DnaJ-bound protein, DnaK hydrolyzes its bound ATP, resulting in the formation of a stable complex. GrpE releases ADP from DnaK; ATP binding to DnaK triggers the release of the substrate protein, thus completing the reaction cycle. Several rounds of ATP-dependent interactions between DnaJ, DnaK and GrpE are required for fully efficient folding. In Chlamydia pneumoniae (Chlamydophila pneumoniae), this protein is Protein GrpE.